The chain runs to 225 residues: Cytidylate kinase (225 aa).

12–20 (GPSGAGKGT) serves as a coordination point for ATP.

This sequence belongs to the cytidylate kinase family. Type 1 subfamily.

The protein localises to the cytoplasm. It carries out the reaction CMP + ATP = CDP + ADP. The enzyme catalyses dCMP + ATP = dCDP + ADP. This Pectobacterium atrosepticum (strain SCRI 1043 / ATCC BAA-672) (Erwinia carotovora subsp. atroseptica) protein is Cytidylate kinase.